The following is a 287-amino-acid chain: Proline iminopeptidase (287 aa).

An AB hydrolase-1 domain is found at 22–271; it reads PLVLLHGGPG…RSRHMAFIDE (250 aa). Ser98 serves as the catalytic Nucleophile. Asp238 is a catalytic residue. The active-site Proton donor is the His265.

The protein belongs to the peptidase S33 family.

It is found in the cell envelope. It catalyses the reaction Release of N-terminal proline from a peptide.. Functionally, releases the N-terminal proline from various substrates. In Lactiplantibacillus plantarum (strain ATCC BAA-793 / NCIMB 8826 / WCFS1) (Lactobacillus plantarum), this protein is Proline iminopeptidase.